The following is a 213-amino-acid chain: MFTGIVQGTAKLVSIDEKPNFRTHVVELPDHMLDGLETGASVAHNGCCLTVTEINGNHVSFDLMKETLRITNLGDLKVGDWVNVERAAKFSDEIGGHLMSGHIMTTAEVAKILTSENNRQIWFKVQDSQLMKYILYKGFIGIDGISLTVGEVTPTRFCVHLIPETLERTTLGKKKLGARVNIEIDPQTQAVVDTVERVLAARENAMNQPGTEA.

Lumazine-binding repeat units lie at residues 1-97 (MFTG…IGGH) and 98-195 (LMSG…VDTV). Residues 4–6 (GIV), 48–50 (CLT), 62–67 (DLMKET), 101–103 (GHI), Lys137, 146–148 (SLT), and 160–165 (HLIPET) each bind 2,4-dihydroxypteridine.

As to quaternary structure, homotrimer. Unlike in B.subtilis, does not interact with 6,7-dimethyl-8-ribityllumazine synthase.

It carries out the reaction 2 6,7-dimethyl-8-(1-D-ribityl)lumazine + H(+) = 5-amino-6-(D-ribitylamino)uracil + riboflavin. It functions in the pathway cofactor biosynthesis; riboflavin biosynthesis; riboflavin from 2-hydroxy-3-oxobutyl phosphate and 5-amino-6-(D-ribitylamino)uracil: step 2/2. In terms of biological role, catalyzes the dismutation of two molecules of 6,7-dimethyl-8-ribityllumazine, resulting in the formation of riboflavin and 5-amino-6-(D-ribitylamino)uracil. The protein is Riboflavin synthase (ribC) of Escherichia coli (strain K12).